Consider the following 303-residue polypeptide: Bifunctional protein FolD (303 aa).

NADP(+)-binding positions include 169-171 (GRG), Thr196, and Val237.

The protein belongs to the tetrahydrofolate dehydrogenase/cyclohydrolase family. In terms of assembly, homodimer.

The enzyme catalyses (6R)-5,10-methylene-5,6,7,8-tetrahydrofolate + NADP(+) = (6R)-5,10-methenyltetrahydrofolate + NADPH. The catalysed reaction is (6R)-5,10-methenyltetrahydrofolate + H2O = (6R)-10-formyltetrahydrofolate + H(+). It participates in one-carbon metabolism; tetrahydrofolate interconversion. Functionally, catalyzes the oxidation of 5,10-methylenetetrahydrofolate to 5,10-methenyltetrahydrofolate and then the hydrolysis of 5,10-methenyltetrahydrofolate to 10-formyltetrahydrofolate. The polypeptide is Bifunctional protein FolD (Micrococcus luteus (strain ATCC 4698 / DSM 20030 / JCM 1464 / CCM 169 / CCUG 5858 / IAM 1056 / NBRC 3333 / NCIMB 9278 / NCTC 2665 / VKM Ac-2230) (Micrococcus lysodeikticus)).